A 258-amino-acid polypeptide reads, in one-letter code: UPF0328 protein ECU02_0090 (258 aa).

This sequence belongs to the UPF0328 family.

In Encephalitozoon cuniculi (strain GB-M1) (Microsporidian parasite), this protein is UPF0328 protein ECU02_0090.